The sequence spans 1220 residues: DNA-directed RNA polymerase subunit beta' (1220 aa).

Positions 60, 62, 75, and 78 each coordinate Zn(2+). Positions 449, 451, and 453 each coordinate Mg(2+). The Zn(2+) site is built by C818, C892, C899, and C902.

The protein belongs to the RNA polymerase beta' chain family. The RNAP catalytic core consists of 2 alpha, 1 beta, 1 beta' and 1 omega subunit. When a sigma factor is associated with the core the holoenzyme is formed, which can initiate transcription. Mg(2+) is required as a cofactor. Zn(2+) serves as cofactor.

The enzyme catalyses RNA(n) + a ribonucleoside 5'-triphosphate = RNA(n+1) + diphosphate. In terms of biological role, DNA-dependent RNA polymerase catalyzes the transcription of DNA into RNA using the four ribonucleoside triphosphates as substrates. This Lacticaseibacillus casei (strain BL23) (Lactobacillus casei) protein is DNA-directed RNA polymerase subunit beta'.